A 73-amino-acid chain; its full sequence is U-scoloptoxin(03)-Ssd1b (73 aa).

The first 23 residues, 1 to 23 (MKSSMAVLLVMGLIIFTLDKCYS), serve as a signal peptide directing secretion.

In terms of processing, contains 3 disulfide bonds. Expressed by the venom gland.

The protein localises to the secreted. This chain is U-scoloptoxin(03)-Ssd1b, found in Scolopendra dehaani (Thai centipede).